A 358-amino-acid chain; its full sequence is MLKTPLYESHIAANAKMIDFSGWSMPINYGSQIQEHNNVREDCGIFDVSHMLAVDIQGSEAEKFLRYLLANDVAKLQENKAQYGCMLNHDAGIVDDLITYKVTDEHFRIVVNAGNRESDVAWFNQNAQNFDVAITPQTDLAIVAVQGPKAVAVIKRVVTKEIAAEIEALLPFSFKFFSKWMVARTGYTGEDGFEVILPATQVKKFWDSLLENGAQPAGLGARDTLRLEAGMHLYGADMDTSTTPLERGLGWSVDLSDEHRDFIGKKAYLAKKAQGVDTKWVGVVLKTKGVLRAGQEIDFDNGEKGYITSGSFSPTLKVAIGLAYVPKQADNPVVNIRGKELEVELVKPKFVKNGKSLI.

Belongs to the GcvT family. As to quaternary structure, the glycine cleavage system is composed of four proteins: P, T, L and H.

It carries out the reaction N(6)-[(R)-S(8)-aminomethyldihydrolipoyl]-L-lysyl-[protein] + (6S)-5,6,7,8-tetrahydrofolate = N(6)-[(R)-dihydrolipoyl]-L-lysyl-[protein] + (6R)-5,10-methylene-5,6,7,8-tetrahydrofolate + NH4(+). Its function is as follows. The glycine cleavage system catalyzes the degradation of glycine. The sequence is that of Aminomethyltransferase from Francisella tularensis subsp. holarctica (strain FTNF002-00 / FTA).